A 201-amino-acid polypeptide reads, in one-letter code: Large ribosomal subunit protein bL25 (201 aa).

Belongs to the bacterial ribosomal protein bL25 family. CTC subfamily. In terms of assembly, part of the 50S ribosomal subunit; part of the 5S rRNA/L5/L18/L25 subcomplex. Contacts the 5S rRNA. Binds to the 5S rRNA independently of L5 and L18.

Its function is as follows. This is one of the proteins that binds to the 5S RNA in the ribosome where it forms part of the central protuberance. In Aromatoleum aromaticum (strain DSM 19018 / LMG 30748 / EbN1) (Azoarcus sp. (strain EbN1)), this protein is Large ribosomal subunit protein bL25.